The sequence spans 99 residues: NADH-quinone oxidoreductase subunit K (99 aa).

The next 3 membrane-spanning stretches (helical) occupy residues 3–23 (PANYLILSALLFTIGTVGVLV), 28–48 (IVVFMSIELMLNAVNLTLVTF), and 59–79 (VMAFFVMVVAAAEVVIGLAII).

This sequence belongs to the complex I subunit 4L family. In terms of assembly, NDH-1 is composed of 14 different subunits. Subunits NuoA, H, J, K, L, M, N constitute the membrane sector of the complex.

It is found in the cell membrane. The catalysed reaction is a quinone + NADH + 5 H(+)(in) = a quinol + NAD(+) + 4 H(+)(out). NDH-1 shuttles electrons from NADH, via FMN and iron-sulfur (Fe-S) centers, to quinones in the respiratory chain. The immediate electron acceptor for the enzyme in this species is believed to be a menaquinone. Couples the redox reaction to proton translocation (for every two electrons transferred, four hydrogen ions are translocated across the cytoplasmic membrane), and thus conserves the redox energy in a proton gradient. In Frankia alni (strain DSM 45986 / CECT 9034 / ACN14a), this protein is NADH-quinone oxidoreductase subunit K.